The primary structure comprises 274 residues: UPF0173 metal-dependent hydrolase AnaeK_1127 (274 aa).

This sequence belongs to the UPF0173 family.

This chain is UPF0173 metal-dependent hydrolase AnaeK_1127, found in Anaeromyxobacter sp. (strain K).